Consider the following 847-residue polypeptide: Beta-galactosidase 1 (847 aa).

A signal peptide spans 1 to 32; it reads MGSKPNAMKNVVAMAAVSALFLLGFLVCSVSG. The active-site Proton donor is Glu-190. Catalysis depends on Glu-259, which acts as the Nucleophile. The N-linked (GlcNAc...) asparagine glycan is linked to Asn-469. In terms of domain architecture, SUEL-type lectin spans 761-847; sequence KPLHPKAHLQ…KKLAVEAVCA (87 aa).

It belongs to the glycosyl hydrolase 35 family. Ubiquitous, at low levels.

The protein resides in the secreted. The protein localises to the extracellular space. It is found in the apoplast. It carries out the reaction Hydrolysis of terminal non-reducing beta-D-galactose residues in beta-D-galactosides.. The chain is Beta-galactosidase 1 (BGAL1) from Arabidopsis thaliana (Mouse-ear cress).